Consider the following 1363-residue polypeptide: DNA-directed RNA polymerase subunit beta' (1363 aa).

Residues 1–39 (MTSTPSKSRKSSKGSKAAKAAASAPETRPLAKTPPPFRN) are disordered. Over residues 14 to 24 (GSKAAKAAASA) the composition is skewed to low complexity. C248, C315, C322, and C325 together coordinate Zn(2+).

Belongs to the RNA polymerase beta' chain family. RpoC2 subfamily. As to quaternary structure, in cyanobacteria the RNAP catalytic core is composed of 2 alpha, 1 beta, 1 beta', 1 gamma and 1 omega subunit. When a sigma factor is associated with the core the holoenzyme is formed, which can initiate transcription. Zn(2+) serves as cofactor.

The catalysed reaction is RNA(n) + a ribonucleoside 5'-triphosphate = RNA(n+1) + diphosphate. In terms of biological role, DNA-dependent RNA polymerase catalyzes the transcription of DNA into RNA using the four ribonucleoside triphosphates as substrates. The chain is DNA-directed RNA polymerase subunit beta' from Synechococcus sp. (strain WH7803).